The chain runs to 3172 residues: Erythronolide synthase EryA3 (3172 aa).

One can recognise a Ketosynthase family 3 (KS3) 1 domain in the interval G38–E452. Module stretches follow at residues I41 to L1464 and I1492 to G2891. The active-site Acyl-thioester intermediate; for beta-ketoacyl synthase 1 activity is the C199. Active-site for beta-ketoacyl synthase 1 activity residues include H334 and H374. Positions V557 to E874 are acyltransferase 1. S643 (acyl-ester intermediate; for acyltransferase 1 activity) is an active-site residue. The beta-ketoacyl reductase 1 stretch occupies residues G1117 to A1294. NADP(+) contacts are provided by residues T1125–I1128, G1148–G1151, D1177–V1178, K1229, and F1249–S1250. Residue Y1264 is the Acyl-ester intermediate; for beta-ketoacyl reductase 1 activity of the active site. In terms of domain architecture, Carrier 1 spans E1392–L1467. At S1427 the chain carries O-(pantetheine 4'-phosphoryl)serine. In terms of domain architecture, Ketosynthase family 3 (KS3) 2 spans D1489–E1916. Residue C1661 is the Acyl-thioester intermediate; for beta-ketoacyl synthase 2 activity of the active site. Catalysis depends on for beta-ketoacyl synthase 2 activity residues H1797 and H1837. An acyltransferase 2 region spans residues V2022 to A2331. The Acyl-ester intermediate; for acyltransferase 2 activity role is filled by S2112. The segment at G2557–A2731 is beta-ketoacyl reductase 2. NADP(+) contacts are provided by residues T2565 to L2568, S2588 to G2591, D2617 to V2618, K2666, and F2686 to S2687. Y2701 functions as the Acyl-ester intermediate; for beta-ketoacyl reductase 2 activity in the catalytic mechanism. Residues Q2819–L2894 enclose the Carrier 2 domain. Residue S2854 is modified to O-(pantetheine 4'-phosphoryl)serine. The segment at I2960–W3166 is thioesterase. T2965 provides a ligand contact to substrate. Catalysis depends on S3031, which acts as the Nucleophile; for thioesterase activity. 2 residues coordinate substrate: A3032 and D3058. The active-site Proton acceptor; for thioesterase activity is H3148.

In terms of assembly, homodimer. Erythronolide synthase is composed of EryAI, EryAII and EryAIII multimodular (2 modules) polypeptides each coding for a functional synthase subunit which participates in 2 of the six FAS-like elongation steps required for formation of the polyketide. Module 1, 2, 3, 4, 5, and 6 participating in biosynthesis steps 1, 2, 3, 4, 5, and 6, respectively. Pantetheine 4'-phosphate is required as a cofactor.

It catalyses the reaction 6 (S)-methylmalonyl-CoA + propanoyl-CoA + 6 NADPH + 12 H(+) = 6-deoxyerythronolide B + 6 CO2 + 6 NADP(+) + 7 CoA + H2O. The protein operates within antibiotic biosynthesis; erythromycin biosynthesis. With respect to regulation, inhibited by diphenyl phosphonates derivatives such as diphenyl allylphosphonate. Involved in the biosynthesis of antibiotic erythromycin via the biosynthesis of its aglycone precursor, 6-deoxyerythronolide B (6-dEB). The chain is Erythronolide synthase EryA3 from Saccharopolyspora erythraea (Streptomyces erythraeus).